A 362-amino-acid polypeptide reads, in one-letter code: Golgi-resident adenosine 3',5'-bisphosphate 3'-phosphatase (362 aa).

Position 1 is an N-acetylmethionine (M1). At 1–12 the chain is on the cytoplasmic side; that stretch reads MAPMGIRLSPLG. The chain crosses the membrane as a helical span at residues 13-33; that stretch reads VAVFCLLGLGVLYHLYSGFLA. At 34–362 the chain is on the lumenal side; that stretch reads GRFSLFGLGG…LPDLEKTGHK (329 aa). Residues 88–109 are disordered; the sequence is RESNVLHEKSKGKTREGADDKM. Residue D113 is the Proton acceptor of the active site. E136, D177, L179, and D180 together coordinate Mg(2+). The active-site Proton acceptor is the T182. AMP contacts are provided by S245 and H248. The N-linked (GlcNAc...) asparagine glycan is linked to N262. AMP-binding residues include G271 and K275. D303 contacts Mg(2+).

Belongs to the inositol monophosphatase superfamily. Mg(2+) serves as cofactor. In terms of processing, contains N-linked glycan resistant to endoglycosydase H.

The protein localises to the golgi apparatus. Its subcellular location is the trans-Golgi network membrane. It carries out the reaction adenosine 3',5'-bisphosphate + H2O = AMP + phosphate. The protein operates within sulfur metabolism. With respect to regulation, strongly inhibited by lithium. Its function is as follows. Exhibits 3'-nucleotidase activity toward adenosine 3',5'-bisphosphate (PAP), namely hydrolyzes adenosine 3',5'-bisphosphate into adenosine 5'-monophosphate (AMP) and a phosphate. May play a role in the formation of skeletal elements derived through endochondral ossification, possibly by clearing adenosine 3',5'-bisphosphate produced by Golgi sulfotransferases during glycosaminoglycan sulfation. Has no activity toward 3'-phosphoadenosine 5'-phosphosulfate (PAPS) or inositol phosphate (IP) substrates including I(1)P, I(1,4)P2, I(1,3,4)P3, I(1,4,5)P3 and I(1,3,4,5)P4. This chain is Golgi-resident adenosine 3',5'-bisphosphate 3'-phosphatase (BPNT2), found in Bos taurus (Bovine).